We begin with the raw amino-acid sequence, 365 residues long: 7-methylxanthine methyltransferase PCS1 (365 aa).

An S-adenosyl-L-homocysteine-binding site is contributed by Tyr-19. Thr-26 contributes to the caffeine binding site. Cys-62, Asn-67, Asp-99, Leu-100, Ser-134, and Phe-135 together coordinate S-adenosyl-L-homocysteine. Tyr-152, His-155, and Trp-156 together coordinate caffeine. Asn-173 contacts Mg(2+). Caffeine is bound at residue His-221. Mg(2+) contacts are provided by Asp-259, Phe-261, and Asn-262. A caffeine-binding site is contributed by Phe-317.

This sequence belongs to the methyltransferase superfamily. Type-7 methyltransferase family. Mg(2+) serves as cofactor.

It carries out the reaction 1,7-dimethylxanthine + S-adenosyl-L-methionine = caffeine + S-adenosyl-L-homocysteine + H(+). The enzyme catalyses 7-methylxanthine + S-adenosyl-L-methionine = theobromine + S-adenosyl-L-homocysteine + H(+). Its pathway is alkaloid biosynthesis. Its function is as follows. Involved in the biosynthesis of caffeine. Catalyzes the conversion of 7-methylxanthine (7mX) to theobromine, and, to some extent, the conversion of paraxanthine to caffeine, but seems not able to convert theobromine to caffeine. The sequence is that of 7-methylxanthine methyltransferase PCS1 from Camellia ptilophylla (Cocoa tea).